The following is a 437-amino-acid chain: 3-deoxy-D-manno-octulosonic acid transferase (437 aa).

Residues 16-36 (VVLVCAFVIALPKLLYKMLVY) traverse the membrane as a helical; Signal-anchor segment. Catalysis depends on E70, which acts as the Proton acceptor. CMP-binding positions include 279-280 (PR), 319-321 (IGL), and 346-349 (NLLE).

The protein belongs to the glycosyltransferase group 1 family. Glycosyltransferase 30 subfamily.

The protein localises to the cell inner membrane. It catalyses the reaction lipid IVA (E. coli) + CMP-3-deoxy-beta-D-manno-octulosonate = alpha-Kdo-(2-&gt;6)-lipid IVA (E. coli) + CMP + H(+). It carries out the reaction alpha-Kdo-(2-&gt;6)-lipid IVA (E. coli) + CMP-3-deoxy-beta-D-manno-octulosonate = alpha-Kdo-(2-&gt;4)-alpha-Kdo-(2-&gt;6)-lipid IVA (E. coli) + CMP + H(+). The enzyme catalyses alpha-Kdo-(2-&gt;4)-alpha-Kdo-(2-&gt;6)-lipid IVA (E. coli) + CMP-3-deoxy-beta-D-manno-octulosonate = alpha-Kdo-(2-&gt;8)-alpha-Kdo-(2-&gt;4)-alpha-Kdo-(2-&gt;6)-lipid IVA (E. coli) + CMP + H(+). It functions in the pathway bacterial outer membrane biogenesis; LPS core biosynthesis. Its function is as follows. Involved in lipopolysaccharide (LPS) biosynthesis. Catalyzes the transfer of three 3-deoxy-D-manno-octulosonate (Kdo) residues from CMP-Kdo to lipid IV(A), the tetraacyldisaccharide-1,4'-bisphosphate precursor of lipid A. Thus generates the genus-specific LPS epitope of Chlamydia, composed of the trisaccharide alpha-Kdo-(2-&gt;8)-alpha-Kdo-(2-&gt;4)-alpha-Kdo. This chain is 3-deoxy-D-manno-octulosonic acid transferase (waaA), found in Chlamydia pneumoniae (Chlamydophila pneumoniae).